A 255-amino-acid chain; its full sequence is Epoxyqueuosine reductase QueH (255 aa).

The [4Fe-4S] cluster site is built by Cys44, Cys45, Cys128, and Cys131. A disulfide bridge links Cys210 with Cys212.

The protein belongs to the QueH family.

The enzyme catalyses epoxyqueuosine(34) in tRNA + AH2 = queuosine(34) in tRNA + A + H2O. It participates in tRNA modification; tRNA-queuosine biosynthesis. Catalyzes the conversion of epoxyqueuosine (oQ) to queuosine (Q), which is a hypermodified base found in the wobble positions of tRNA(Asp), tRNA(Asn), tRNA(His) and tRNA(Tyr). In Streptococcus pyogenes serotype M1, this protein is Epoxyqueuosine reductase QueH.